Reading from the N-terminus, the 439-residue chain is Ectonucleotide pyrophosphatase/phosphodiesterase family member 7 (439 aa).

The signal sequence occupies residues 1-21 (MGHSAVLLCVALAILPACVTG). The Extracellular portion of the chain corresponds to 22–414 (APVQRQHKLL…ILRPMLRSGS (393 aa)). Residues Asp36 and Thr72 each contribute to the Zn(2+) site. The segment at 69–75 (VTMTSPC) is required for enzyme activity. Thr72 functions as the Nucleophile in the catalytic mechanism. Asn93 is a binding site for substrate. N-linked (GlcNAc...) asparagine glycans are attached at residues Asn97, Asn118, Asn143, and Asn165. Residues Asp196, His200, Asp243, and His244 each coordinate Zn(2+). N-linked (GlcNAc...) asparagine glycosylation occurs at Asn264. Position 350 (His350) interacts with Zn(2+). The helical transmembrane segment at 415 to 435 (ASLLSSQHHLVALLVGILTCL) threads the bilayer. Over 436-439 (AKVL) the chain is Cytoplasmic.

Zn(2+) is required as a cofactor. Post-translationally, N-glycosylated; required for activity and transport to the plasma membrane. In terms of tissue distribution, expressed in liver and small intestine.

Its subcellular location is the cell membrane. The enzyme catalyses a sphingomyelin + H2O = phosphocholine + an N-acylsphing-4-enine + H(+). It carries out the reaction a 1-O-alkyl-2-acetyl-sn-glycero-3-phosphocholine + H2O = a 1-O-alkyl-2-acetyl-sn-glycerol + phosphocholine + H(+). The catalysed reaction is 1-O-octadecyl-2-acetyl-sn-glycero-3-phosphocholine + H2O = 1-O-octadecyl-2-acetyl-sn-glycerol + phosphocholine + H(+). It catalyses the reaction 1-hexadecanoyl-sn-glycero-3-phosphocholine + H2O = 1-hexadecanoyl-sn-glycerol + phosphocholine + H(+). In terms of biological role, choline-specific phosphodiesterase that hydrolyzes sphingomyelin releasing the ceramide and phosphocholine and therefore is involved in sphingomyelin digestion, ceramide formation, and fatty acid (FA) absorption in the gastrointestinal tract. Also has phospholipase C activity and can also cleave phosphocholine from palmitoyl lyso-phosphatidylcholine and platelet-activating factor (PAF) leading to its inactivation. Does not have nucleotide pyrophosphatase activity. May promote cholesterol absorption by affecting the levels of sphingomyelin derived from either diet or endogenous sources, in the intestinal lumen. The sequence is that of Ectonucleotide pyrophosphatase/phosphodiesterase family member 7 from Mus musculus (Mouse).